Here is a 272-residue protein sequence, read N- to C-terminus: Exosome complex component MTR3 (272 aa).

The tract at residues 1 to 36 (MPGDHRRIRGPEESQPPQLYAADEEEAPGTRDPTRL) is disordered.

Belongs to the RNase PH family. As to quaternary structure, component of the RNA exosome core complex (Exo-9), composed of EXOSC1, EXOSC2, EXOSC3, EXOSC4, EXOSC5, EXOSC6, EXOSC7, EXOSC8 and EXOSC9; within the complex interacts with EXOSC1, EXOSC7 and EXOSC8. The catalytically inactive Exo-9 may associate with the catalytic subunit EXOSC10/RRP6. Exo-9 may associate with DIS3 to form the nucleolar exosome complex, or DIS3L to form the cytoplasmic exosome complex. Exo-9 is formed by a hexameric base ring consisting of the heterodimers EXOSC4-EXOSC9, EXOSC5-EXOSC8 and EXOSC6-EXOSC7, and a cap ring consisting of EXOSC1, EXOSC2 and EXOSC3. The RNA exosome complex associates with cofactors EXOSC10/RRP6, C1D/RRP47, MPHOSPH6/MPP6 and MTREX/MTR4.

It is found in the cytoplasm. Its subcellular location is the nucleus. It localises to the nucleolus. Functionally, non-catalytic component of the RNA exosome complex which has 3'-&gt;5' exoribonuclease activity and participates in a multitude of cellular RNA processing and degradation events. In the nucleus, the RNA exosome complex is involved in proper maturation of stable RNA species such as rRNA, snRNA and snoRNA, in the elimination of RNA processing by-products and non-coding 'pervasive' transcripts, such as antisense RNA species and promoter-upstream transcripts (PROMPTs), and of mRNAs with processing defects, thereby limiting or excluding their export to the cytoplasm. The RNA exosome may be involved in Ig class switch recombination (CSR) and/or Ig variable region somatic hypermutation (SHM) by targeting AICDA deamination activity to transcribed dsDNA substrates. In the cytoplasm, the RNA exosome complex is involved in general mRNA turnover and specifically degrades inherently unstable mRNAs containing AU-rich elements (AREs) within their 3' untranslated regions, and in RNA surveillance pathways, preventing translation of aberrant mRNAs. It seems to be involved in degradation of histone mRNA. The catalytic inactive RNA exosome core complex of 9 subunits (Exo-9) is proposed to play a pivotal role in the binding and presentation of RNA for ribonucleolysis, and to serve as a scaffold for the association with catalytic subunits and accessory proteins or complexes. The sequence is that of Exosome complex component MTR3 (EXOSC6) from Homo sapiens (Human).